A 491-amino-acid chain; its full sequence is Iota-carrageenase (491 aa).

The N-terminal stretch at 1–23 is a signal peptide; sequence MRLYFRKLWLTNLFLGGALASSA. 4 cysteine pairs are disulfide-bonded: cysteine 269–cysteine 298, cysteine 336–cysteine 360, cysteine 408–cysteine 476, and cysteine 412–cysteine 484.

Belongs to the glycosyl hydrolase 82 family.

Its subcellular location is the secreted. It catalyses the reaction Endohydrolysis of 1,4-beta-D-linkages between D-galactose 4-sulfate and 3,6-anhydro-D-galactose-2-sulfate in iota-carrageenans.. Its function is as follows. Hydrolyzes iota-carrageenans, sulfated 1,3-alpha-1,4-beta galactans from red algal cell walls, with an inversion of anomeric configuration. Also active against hybrid iota-/nu-carrageenan, not active against kappa- or lambda-carrageenans. The sequence is that of Iota-carrageenase from Alteromonas macleodii (Pseudoalteromonas macleodii).